The sequence spans 494 residues: MHFVPTMGGLHHGHASLISAASCHKSGDVETLVSVFVNPLQFGPNEDFARYPRTFEADCELAELSGASAIWCPDESQIYPGGSAESWRIQAPKSLQSRLCGSTRPGHFDGVVTVVCRLLALAKPHQLFLGEKDWQQLTILRRMVLDLGLAVRVRGVPTVRDGDGLASSSRNRYLNAQQRQQGVLFAQVLSDARSACLHGGTALKPGEVKRRLEEVGLSVEYVDVVDPWFLQPSKSNQSSLTLLAAAVRCGSTRLIDHAFLMTRSPLVAIDGPAGAGKSTVTRAFAERLGLVYLDTGAMYRAVTWLVLEQGGDPGDSEAVDLVLNDLKVELEPLQQGVQVVRVNGHEVTDAIRDPRVTASVSAVASHACVRAAMTAQQQRMGKAGGLVAEGRDIGTAVFPDAELKVFLTATPKERARRRALDLEARGHEVPALPELEAQIVERDRLDSTREVAPLLQADDAIELISDGMSIDQVIDALEDLFRRRVGEEVWPTPV.

Residues 1 to 258 are pantoate--beta-alanine ligase; it reads MHFVPTMGGL…CGSTRLIDHA (258 aa). Residue 7 to 14 participates in ATP binding; the sequence is MGGLHHGH. The Proton donor role is filled by His14. Gln41 lines the (R)-pantoate pocket. Residue Gln41 coordinates beta-alanine. 130–133 lines the ATP pocket; the sequence is GEKD. Residue Gln136 participates in (R)-pantoate binding. ATP-binding positions include Val159 and 167–170; that span reads SSSR. The segment at 259 to 494 is cytidylate kinase; the sequence is FLMTRSPLVA…VGEEVWPTPV (236 aa).

In the N-terminal section; belongs to the pantothenate synthetase family. It in the C-terminal section; belongs to the cytidylate kinase family. Type 1 subfamily.

Its subcellular location is the cytoplasm. It catalyses the reaction (R)-pantoate + beta-alanine + ATP = (R)-pantothenate + AMP + diphosphate + H(+). It carries out the reaction CMP + ATP = CDP + ADP. The catalysed reaction is dCMP + ATP = dCDP + ADP. The protein operates within cofactor biosynthesis; (R)-pantothenate biosynthesis; (R)-pantothenate from (R)-pantoate and beta-alanine: step 1/1. Its function is as follows. Catalyzes the condensation of pantoate with beta-alanine in an ATP-dependent reaction via a pantoyl-adenylate intermediate. Functionally, catalyzes the transfer of a phosphate group from ATP to either CMP or dCMP to form CDP or dCDP and ADP, respectively. The sequence is that of Bifunctional pantoate ligase/cytidylate kinase from Synechococcus sp. (strain CC9311).